A 363-amino-acid chain; its full sequence is Ribosome-binding ATPase YchF (363 aa).

Positions 3–256 (FKCGIVGLPN…LDDDEKIEFL (254 aa)) constitute an OBG-type G domain. ATP is bound at residue 12–17 (NVGKST). 2 residues coordinate Mg(2+): Ser-16 and Thr-36. A TGS domain is found at 278–361 (NLQTYFTAGV…QDGDVMHFRF (84 aa)).

Belongs to the TRAFAC class OBG-HflX-like GTPase superfamily. OBG GTPase family. YchF/OLA1 subfamily. The cofactor is Mg(2+).

ATPase that binds to both the 70S ribosome and the 50S ribosomal subunit in a nucleotide-independent manner. This Pasteurella multocida (strain Pm70) protein is Ribosome-binding ATPase YchF.